The primary structure comprises 358 residues: Feruloyl CoA ortho-hydroxylase F6H1-3 (358 aa).

Positions 200 to 308 (TKESLLMGSK…RISVPIFVNP (109 aa)) constitute a Fe2OG dioxygenase domain. Y216 lines the 2-oxoglutarate pocket. Residues H231, D233, and H289 each contribute to the Fe cation site. 2-oxoglutarate is bound by residues R299 and S301.

The protein belongs to the iron/ascorbate-dependent oxidoreductase family. Requires L-ascorbate as cofactor. The cofactor is Fe(2+). Mostly expressed in tubers, and, at low levels, in underground stems, stems, leaves and petioles.

It carries out the reaction (E)-feruloyl-CoA + 2-oxoglutarate + O2 = (E)-6-hydroxyferuloyl-CoA + succinate + CO2. The protein operates within phenylpropanoid metabolism. 2-oxoglutarate (OG)- and Fe(II)-dependent dioxygenase (2OGD) involved in scopoletin biosynthesis. Converts feruloyl CoA into 6'-hydroxyferuloyl CoA, and, at low efficiency, caffeoyl-CoA into 6'-hydroxycaffeate, but has no activity with p-coumaroyl-CoA. The protein is Feruloyl CoA ortho-hydroxylase F6H1-3 of Ipomoea batatas (Sweet potato).